A 185-amino-acid chain; its full sequence is Protein E3 homolog (185 aa).

The Z-binding domain maps to 7 to 73 (TVNDAEIFSL…SNPPKWFKNY (67 aa)). Residues 112 to 179 (NPCIVLNEYC…SKITMDEILD (68 aa)) form the DRBM domain.

This sequence belongs to the poxviridae E3 protein family.

Functionally, RNA-binding protein that plays a role in the inhibition of multiple cellular antiviral responses activated by double-stranded RNA (dsRNA), such as inhibition of PKR activation, necroptosis, and IFN-mediated antiviral activities. Recognizes and binds Z-RNA structures via its Z-binding domain and dsRNA via its DRBM domain: RNA-binding activity is required to escape host ZBP1-dependent necroptosis. Mechanistically, the Z-binding domain binds Z-RNAs that are produced during Yaba-like disease virus infection, thereby competing with Z-RNA detection by host ZBP1, suppressing ZBP1-dependent necroptosis. The sequence is that of Protein E3 homolog from Yaba-like disease virus (YLDV).